The following is a 149-amino-acid chain: Arginine repressor (149 aa).

This sequence belongs to the ArgR family.

The protein resides in the cytoplasm. Its pathway is amino-acid biosynthesis; L-arginine biosynthesis [regulation]. Its function is as follows. Regulates arginine biosynthesis genes. The protein is Arginine repressor of Chlorobaculum parvum (strain DSM 263 / NCIMB 8327) (Chlorobium vibrioforme subsp. thiosulfatophilum).